The chain runs to 369 residues: MAFAGLKKQINKANQYMTEKMGGAEGTKLDMDFMEMERKTDVTVELVEELQLKTKEFLQPNPTARAKMAAVKGISKLSGQAKSNTYPQPEGLLAECMLTYGKKLGEDNSVFAQALVEFGEALKQMADVKYSLDDNIKQNFLEPLHHMQTKDLKEVMHHRKKLQGRRLDFDCKRRRQAKDDEIRGAEDKFGESLQLAQVGMFNLLENDTEHVSQLVTFAEALYDFHSQCADVLRGLQETLQEKRSEAESRPRNEFVPKTLLDLNLDGGGGGLNEDGTPSHISSSASPLPSPMRSPAKSMAVTPQRQQQPCCQALYDFEPENPGELAFKENDIITLLNRVDDNWFEGAVNGRTGYFPQSYVQVQVPLPNGN.

The BAR domain maps to 18-248; the sequence is TEKMGGAEGT…LQEKRSEAES (231 aa). Residues 227–247 adopt a coiled-coil conformation; it reads QCADVLRGLQETLQEKRSEAE. The interval 266-295 is disordered; the sequence is GGGGGLNEDGTPSHISSSASPLPSPMRSPA. Positions 277–294 are enriched in low complexity; that stretch reads PSHISSSASPLPSPMRSP. The region spanning 305 to 364 is the SH3 domain; the sequence is QQQPCCQALYDFEPENPGELAFKENDIITLLNRVDDNWFEGAVNGRTGYFPQSYVQVQVP.

The protein belongs to the endophilin family.

It localises to the cytoplasm. Its subcellular location is the membrane. In terms of biological role, required presynaptically at the neuromuscular junction. Implicated in synaptic vesicle endocytosis. This Drosophila erecta (Fruit fly) protein is Endophilin-A.